The sequence spans 875 residues: E3 SUMO-protein ligase SIZ1 (875 aa).

The SAP domain maps to 12–46; sequence LAYFRIKELKDILNQLGLPKQGKKQDLIDRVLALL. The PHD-type zinc-finger motif lies at 114-169; sequence KVRCICSSTMVNDSMIQCEDQRCQVWQHLNCVLIPDKPGESAEVPPVFYCELCRLS. The SP-RING-type zinc finger occupies 349 to 430; it reads SDLEVVAESV…FNRITSLLRN (82 aa). Positions 380, 382, 403, and 406 each coordinate Zn(2+). Residues 796 to 820 are disordered; it reads GGGGNEEPAPADVNSQPQIPSTETG. Positions 808–819 are enriched in polar residues; the sequence is VNSQPQIPSTET.

It belongs to the PIAS family.

The protein localises to the nucleus. It functions in the pathway protein modification; protein sumoylation. Functionally, probable SUMO E3 ligase that may regulate Pi starvation responses. This Oryza sativa subsp. japonica (Rice) protein is E3 SUMO-protein ligase SIZ1 (SIZ1).